The primary structure comprises 312 residues: Ribose-phosphate pyrophosphokinase (312 aa).

ATP-binding positions include 34 to 36 (DGE) and 93 to 94 (RQ). Mg(2+)-binding residues include H128 and D167. The active site involves K191. Residues R193 and D217 each contribute to the D-ribose 5-phosphate site.

This sequence belongs to the ribose-phosphate pyrophosphokinase family. Class I subfamily. Homohexamer. The cofactor is Mg(2+).

It localises to the cytoplasm. The catalysed reaction is D-ribose 5-phosphate + ATP = 5-phospho-alpha-D-ribose 1-diphosphate + AMP + H(+). The protein operates within metabolic intermediate biosynthesis; 5-phospho-alpha-D-ribose 1-diphosphate biosynthesis; 5-phospho-alpha-D-ribose 1-diphosphate from D-ribose 5-phosphate (route I): step 1/1. In terms of biological role, involved in the biosynthesis of the central metabolite phospho-alpha-D-ribosyl-1-pyrophosphate (PRPP) via the transfer of pyrophosphoryl group from ATP to 1-hydroxyl of ribose-5-phosphate (Rib-5-P). The sequence is that of Ribose-phosphate pyrophosphokinase from Baumannia cicadellinicola subsp. Homalodisca coagulata.